The chain runs to 152 residues: Regulatory protein RecX (152 aa).

It belongs to the RecX family.

The protein resides in the cytoplasm. Modulates RecA activity. This chain is Regulatory protein RecX, found in Haemophilus influenzae (strain PittEE).